The sequence spans 165 residues: Phosphopantetheine adenylyltransferase (165 aa).

A substrate-binding site is contributed by serine 10. ATP contacts are provided by residues 10-11 (SF) and histidine 18. Substrate contacts are provided by lysine 42, leucine 74, and arginine 88. Residues 89-91 (GLR), glutamate 99, and 124-130 (YSYLSSS) each bind ATP.

Belongs to the bacterial CoaD family. As to quaternary structure, homohexamer. It depends on Mg(2+) as a cofactor.

The protein localises to the cytoplasm. It catalyses the reaction (R)-4'-phosphopantetheine + ATP + H(+) = 3'-dephospho-CoA + diphosphate. It functions in the pathway cofactor biosynthesis; coenzyme A biosynthesis; CoA from (R)-pantothenate: step 4/5. In terms of biological role, reversibly transfers an adenylyl group from ATP to 4'-phosphopantetheine, yielding dephospho-CoA (dPCoA) and pyrophosphate. The protein is Phosphopantetheine adenylyltransferase of Halalkalibacterium halodurans (strain ATCC BAA-125 / DSM 18197 / FERM 7344 / JCM 9153 / C-125) (Bacillus halodurans).